The chain runs to 244 residues: 2-C-methyl-D-erythritol 4-phosphate cytidylyltransferase (244 aa).

This sequence belongs to the IspD/TarI cytidylyltransferase family. IspD subfamily.

It carries out the reaction 2-C-methyl-D-erythritol 4-phosphate + CTP + H(+) = 4-CDP-2-C-methyl-D-erythritol + diphosphate. It functions in the pathway isoprenoid biosynthesis; isopentenyl diphosphate biosynthesis via DXP pathway; isopentenyl diphosphate from 1-deoxy-D-xylulose 5-phosphate: step 2/6. Catalyzes the formation of 4-diphosphocytidyl-2-C-methyl-D-erythritol from CTP and 2-C-methyl-D-erythritol 4-phosphate (MEP). The sequence is that of 2-C-methyl-D-erythritol 4-phosphate cytidylyltransferase from Prosthecochloris aestuarii (strain DSM 271 / SK 413).